The sequence spans 124 residues: Small ribosomal subunit protein uS13 (124 aa).

A disordered region spans residues 95–124 (GLPVRGQRTKTNARTRKGPKRTIAGKKKAK).

This sequence belongs to the universal ribosomal protein uS13 family. In terms of assembly, part of the 30S ribosomal subunit. Forms a loose heterodimer with protein S19. Forms two bridges to the 50S subunit in the 70S ribosome.

In terms of biological role, located at the top of the head of the 30S subunit, it contacts several helices of the 16S rRNA. In the 70S ribosome it contacts the 23S rRNA (bridge B1a) and protein L5 of the 50S subunit (bridge B1b), connecting the 2 subunits; these bridges are implicated in subunit movement. Contacts the tRNAs in the A and P-sites. This chain is Small ribosomal subunit protein uS13, found in Rhodococcus jostii (strain RHA1).